Here is a 439-residue protein sequence, read N- to C-terminus: MRLATDQLGRPPQRVAVLSVHTSPLAQPGTGDAGGMNVYVLQSALHMARRGVEVEIFTRATTSADPPVVRVAPGVLVRNVVAGPFEGLDKYDLPTQLCAFTAGVLRAEATHEPGYYDIVHSHYWLSGQVGWLARDRWAVPLVHTAHTLAAVKNAALAEGDSPEPPLRAVGEQQVVDEADRLIVNTELEAEQLVSLHNADPSRIDVVHPGVDLDTFTPGDQAAARAALGLDPRETVVAFVGRIQPLKAPDILLRAAAKLPDVRVLVAGGPSGSGLAAPDNLVALADELGISERVTFLPPQSREDLVRVYRAADLVAVPSYSESFGLVAVEAQACGTPVVAAAVGGLPVAVRDGVTGALVDGHDVGDWAHTIDSLLSRGPATMRRAAVEHAATFSWAHTVDDLLASYGRAISDYRDRHPHADETLSRRTARRFSRRRGVRA.

Histidine 21 serves as a coordination point for 1D-myo-inositol 3-phosphate. Residues 27–28 and glycine 35 contribute to the UDP-N-acetyl-alpha-D-glucosamine site; that span reads QP. 1D-myo-inositol 3-phosphate contacts are provided by residues 32–37, lysine 90, tyrosine 123, threonine 147, and arginine 167; that span reads DAGGMN. Arginine 241, lysine 246, and glutamine 299 together coordinate UDP-N-acetyl-alpha-D-glucosamine. Mg(2+) is bound by residues tyrosine 308, arginine 309, and alanine 311. UDP-N-acetyl-alpha-D-glucosamine-binding residues include glutamate 321 and glutamate 329. Mg(2+) is bound at residue threonine 335.

The protein belongs to the glycosyltransferase group 1 family. MshA subfamily. Homodimer.

It carries out the reaction 1D-myo-inositol 3-phosphate + UDP-N-acetyl-alpha-D-glucosamine = 1D-myo-inositol 2-acetamido-2-deoxy-alpha-D-glucopyranoside 3-phosphate + UDP + H(+). Its function is as follows. Catalyzes the transfer of a N-acetyl-glucosamine moiety to 1D-myo-inositol 3-phosphate to produce 1D-myo-inositol 2-acetamido-2-deoxy-glucopyranoside 3-phosphate in the mycothiol biosynthesis pathway. The sequence is that of D-inositol 3-phosphate glycosyltransferase from Mycobacterium sp. (strain JLS).